The sequence spans 309 residues: Large ribosomal subunit protein mL45 (309 aa).

The protein belongs to the mitochondrion-specific ribosomal protein mL45 family. Component of the mitochondrial ribosome large subunit (39S) which comprises a 16S rRNA and about 50 distinct proteins.

It localises to the mitochondrion. Component of the mitochondrial large ribosomal subunit (mt-LSU). Within the mitochondrial ribosomes, required to direct the nascent polypeptide toward the tunnel exit and position the exit at a distance from the membrane surface. The sequence is that of Large ribosomal subunit protein mL45 (mrpl45) from Xenopus laevis (African clawed frog).